Reading from the N-terminus, the 211-residue chain is Redox-sensing transcriptional repressor Rex (211 aa).

The H-T-H motif DNA-binding region spans 13 to 52; it reads TYLRILEELEAQGVHRTSSEQLGELAQVTAFQVRKDLSYF. An NAD(+)-binding site is contributed by 87 to 92; it reads GMGRLG.

The protein belongs to the transcriptional regulatory Rex family. Homodimer.

The protein resides in the cytoplasm. Modulates transcription in response to changes in cellular NADH/NAD(+) redox state. This chain is Redox-sensing transcriptional repressor Rex, found in Thermus aquaticus.